The chain runs to 591 residues: MVDVPYDRIADIPPAEVPDVELYHPRSWWTRYVFSQDAKVIAIQYSLTASAIGLVALVLSWLMRLQLGFPGTFSFIDANQYLQFITMHGMIMVIYLLTALFLGGFGNYLIPLMVGARDMVFPYVNMLSYWVYLLAVLVLASAFFVPGGPTGAGWTLYPPQAILSGTPGQDWGIVLMLSSLILFIIGFTMGGLNYVVTVLQARTRGMTLMRLPLTVWGIFTATVMALLAFPALFVGSVMLLLDRLLGTSFFMPTLVEMGQLSKYGGGSPLLFQHLFWFFGHPEVYIVALPAFGIVSDLISTHARKNIFGYRMMVWAIVAIGALSFVVWAHHMYVSGMYPYFGFFFATTTLIIAIPTAIKVYNWVLTLWHGDIHLTVPMLFALGFIITFVNGGLTGLFLGNVVVDVPLSDTMFVVAHFHMVMGVAPIMVVLGAIYHWYPKVTGRMLNDVLGKFHFWVTFLGAYLIFFPMHYLGLLGVPRRYFELGDAAFIPPSAHSLNAFITVVALTVGFAQMVFLFNLVWSLFEGEPSGGNPWRATTLEWQTPETPPGHGNWGKQLPIVYRWAYDYSVPGAAQDFIPQNQPPPTGAVQGVAP.

The chain crosses the membrane as a helical span at residues 40 to 60 (VIAIQYSLTASAIGLVALVLS). H88 is a heme b binding site. Helical transmembrane passes span 90–110 (MIMVIYLLTALFLGGFGNYLI), 126–146 (MLSYWVYLLAVLVLASAFFVP), 172–192 (GIVLMLSSLILFIIGFTMGGL), 215–235 (VWGIFTATVMALLAFPALFVG), 274–294 (LFWFFGHPEVYIVALPAFGIV), 313–333 (VWAIVAIGALSFVVWAHHMYV), 337–357 (YPYFGFFFATTTLIIAIPTAI), 377–397 (MLFALGFIITFVNGGLTGLFL), 412–432 (VVAHFHMVMGVAPIMVVLGAI), 453–473 (FWVTFLGAYLIFFPMHYLGLL), and 498–518 (FITVVALTVGFAQMVFLFNLV). Cu cation contacts are provided by H280, Y284, H329, and H330. Positions 280–284 (HPEVY) form a cross-link, 1'-histidyl-3'-tyrosine (His-Tyr). Heme b is bound by residues H415 and H417.

The protein belongs to the heme-copper respiratory oxidase family. This alternate cytochrome c oxidase consists of a subunit I and two cytochromes c. Equivalents to subunit 2 and 3 are not present in this complex.

Its subcellular location is the cell membrane. The catalysed reaction is 4 Fe(II)-[cytochrome c] + O2 + 8 H(+)(in) = 4 Fe(III)-[cytochrome c] + 2 H2O + 4 H(+)(out). Functionally, cytochrome c oxidase is the component of the respiratory chain that catalyzes the reduction of oxygen to water. Subunits 1-3 form the functional core of the enzyme complex. Co I is the catalytic subunit of the enzyme. Electrons originating in cytochrome c are transferred via the copper A center of subunit 2 and a low-spin heme of subunit 1 to the bimetallic center formed by a high-spin heme and copper B. The polypeptide is Alternative cytochrome c oxidase subunit 1 (coxN) (Bradyrhizobium diazoefficiens (strain JCM 10833 / BCRC 13528 / IAM 13628 / NBRC 14792 / USDA 110)).